Here is a 416-residue protein sequence, read N- to C-terminus: Adenylosuccinate synthetase (416 aa).

Residues 12–18 (GDEGKGK) and 40–42 (GHT) contribute to the GTP site. Asp-13 acts as the Proton acceptor in catalysis. Mg(2+)-binding residues include Asp-13 and Gly-40. Residues 13 to 16 (DEGK), 38 to 41 (NAGH), Thr-125, Arg-139, Gln-220, Thr-235, and Arg-299 each bind IMP. Catalysis depends on His-41, which acts as the Proton donor. 295–301 (TTTGRPR) is a binding site for substrate. GTP-binding positions include Arg-301, 327 to 329 (KLD), and 405 to 407 (STS).

It belongs to the adenylosuccinate synthetase family. Homodimer. Requires Mg(2+) as cofactor.

It localises to the cytoplasm. The catalysed reaction is IMP + L-aspartate + GTP = N(6)-(1,2-dicarboxyethyl)-AMP + GDP + phosphate + 2 H(+). Its pathway is purine metabolism; AMP biosynthesis via de novo pathway; AMP from IMP: step 1/2. Plays an important role in the de novo pathway of purine nucleotide biosynthesis. Catalyzes the first committed step in the biosynthesis of AMP from IMP. This chain is Adenylosuccinate synthetase, found in Nitratiruptor sp. (strain SB155-2).